We begin with the raw amino-acid sequence, 371 residues long: Signal peptide peptidase-like 1 (371 aa).

Residues 1 to 6 are Lumenal-facing; it reads MESLWK. Residues 7 to 27 form a helical membrane-spanning segment; sequence LSYLLEPASLALILTAVSVAY. The Cytoplasmic portion of the chain corresponds to 28 to 57; the sequence is ASASRALDHGREMERNLDFSEASITLDRSQ. A helical membrane pass occupies residues 58–75; that stretch reads ALMIPLASSCSLLLMFYL. Residues 76 to 80 are Lumenal-facing; that stretch reads FSSVS. Residues 81–103 form a helical membrane-spanning segment; the sequence is HLVTAFTAVASAMALFFCLSPYV. At 104–123 the chain is on the cytoplasmic side; that stretch reads NCVRSRLGVGDPFVSRCCSK. A helical transmembrane segment spans residues 124–146; it reads PFTRLQGLLVAICVGTVVAWLVS. The Lumenal segment spans residues 147 to 149; it reads GHW. Residues 150–167 form a helical membrane-spanning segment; the sequence is LLNNLLGISICIAFVSHV. The Cytoplasmic portion of the chain corresponds to 168–171; it reads RLPN. A helical membrane pass occupies residues 172–192; it reads IKICALLLVCLFVYDVFWVFF. Asp-186 is a catalytic residue. The Lumenal segment spans residues 193–258; it reads SERFFGANVM…LAPGSSPGDY (66 aa). Residues 259-279 form a helical membrane-spanning segment; the sequence is MMLGLGDMAIPGMLLALVLSF. Residue Asp-265 is part of the active site. The Cytoplasmic portion of the chain corresponds to 280–301; it reads DHRKIKDMSVSQDMPPSKQRKY. The chain crosses the membrane as a helical span at residues 302–322; sequence VWYALTGYGVGLVTALAAGIL. Over 323 to 326 the chain is Lumenal; sequence SQSP. The helical transmembrane segment at 327–347 threads the bilayer; that stretch reads QPALLYLVPSTLGPVMYMSWL. The PAL motif lies at 328–330; sequence PAL. At 348 to 371 the chain is on the cytoplasmic side; sequence RNELWELWEGSRPIINDKAHLLEV.

It belongs to the peptidase A22B family.

The protein resides in the endosome membrane. In terms of biological role, intramembrane-cleaving aspartic protease (I-CLiP) that cleaves type II membrane signal peptides in the hydrophobic plane of the membrane. The sequence is that of Signal peptide peptidase-like 1 (SPPL1) from Oryza sativa subsp. japonica (Rice).